Here is a 173-residue protein sequence, read N- to C-terminus: Large ribosomal subunit protein uL10 (173 aa).

This sequence belongs to the universal ribosomal protein uL10 family. As to quaternary structure, part of the ribosomal stalk of the 50S ribosomal subunit. The N-terminus interacts with L11 and the large rRNA to form the base of the stalk. The C-terminus forms an elongated spine to which L12 dimers bind in a sequential fashion forming a multimeric L10(L12)X complex.

Forms part of the ribosomal stalk, playing a central role in the interaction of the ribosome with GTP-bound translation factors. In Acidithiobacillus ferrooxidans (strain ATCC 23270 / DSM 14882 / CIP 104768 / NCIMB 8455) (Ferrobacillus ferrooxidans (strain ATCC 23270)), this protein is Large ribosomal subunit protein uL10.